A 344-amino-acid chain; its full sequence is Mitochondrial substrate carrier family protein D (344 aa).

Residues 1–22 lie on the Mitochondrial intermembrane side of the membrane; the sequence is MDSTKTNNKWAAAGILNSVGKD. Solcar repeat units lie at residues 17 to 104, 119 to 212, and 239 to 327; these read NSVG…CQSY, IPYH…MKRK, and VPAW…TRNL. A helical membrane pass occupies residues 23-43; that stretch reads FVAGSVGGMSSIMAGHPFDTI. Residues 44 to 75 lie on the Mitochondrial matrix side of the membrane; sequence KVMLQDASGNLPKFKNGFQALKYIMKVDGIKG. The helical transmembrane segment at 76-96 threads the bilayer; that stretch reads IYRGLSVPLFSVSFTNSVFFA. At 97 to 116 the chain is on the mitochondrial intermembrane side; that stretch reads TNNFCQSYFHPPCKDENGED. Residues 117–137 form a helical membrane-spanning segment; that stretch reads ILIPYHKAAAAGAIAGGVISL. Residues 138-186 lie on the Mitochondrial matrix side of the membrane; it reads LITPRDLVKSKLQVQCRPFGSTNVSLQYKGPIDVIRQTIKRDGIKGMFK. Residues 187–207 traverse the membrane as a helical segment; it reads GIRSTFCRDIPGDAVYFVVYE. Over 208–238 the chain is Mitochondrial intermembrane; that stretch reads FMKRKLLALSKNNNNNNNNNDNNDNSSPKAG. Residues 239-259 form a helical membrane-spanning segment; the sequence is VPAWVAIGAGGCAGMSFWMSI. Topologically, residues 260–301 are mitochondrial matrix; it reads YPMDVVKTRIQTQPDHLPPQYTSVLQTITKIYREEGISVFFR. The chain crosses the membrane as a helical span at residues 302-321; sequence GFSATILRAFPTSAVNFLMY. Topologically, residues 322–344 are mitochondrial intermembrane; it reads ETTRNLLNSKDPFYNNNDHYNAE.

It belongs to the mitochondrial carrier (TC 2.A.29) family.

The protein localises to the mitochondrion inner membrane. In terms of biological role, calcium-dependent mitochondrial solute carrier. Mitochondrial solute carriers shuttle metabolites, nucleotides, and cofactors through the mitochondrial inner membrane. The protein is Mitochondrial substrate carrier family protein D (mcfD) of Dictyostelium discoideum (Social amoeba).